The chain runs to 323 residues: rRNA 2'-O-methyltransferase fibrillarin (323 aa).

Positions 1 to 80 (MSFRPGSRGG…GARGGAKGGA (80 aa)) are disordered. Over residues 7–78 (SRGGARGGRG…RGGARGGAKG (72 aa)) the composition is skewed to gly residues. Arg8, Arg12, Arg15, Arg19, Arg25, Arg29, Arg35, Arg39, Arg43, Arg49, Arg53, Arg57, Arg61, Arg65, Arg69, and Arg73 each carry asymmetric dimethylarginine. Residues 175–176 (TS), 194–195 (EF), 219–220 (DA), and 239–242 (DVAQ) contribute to the S-adenosyl-L-methionine site.

This sequence belongs to the methyltransferase superfamily. Fibrillarin family. In terms of assembly, component of box C/D small nucleolar ribonucleoprotein (snoRNP) particles that contain SNU13, NOP1, SIK1/NOP56 and NOP58, plus a guide RNA. Post-translationally, by homology to other fibrillarins, some or all of the N-terminal domain arginines are modified to asymmetric dimethylarginine (DMA).

Its subcellular location is the nucleus. It is found in the nucleolus. It carries out the reaction L-glutaminyl-[histone H2A] + S-adenosyl-L-methionine = N(5)-methyl-L-glutaminyl-[histone H2A] + S-adenosyl-L-homocysteine + H(+). Its function is as follows. S-adenosyl-L-methionine-dependent methyltransferase that has the ability to methylate both RNAs and proteins. Involved in pre-rRNA processing. Utilizes the methyl donor S-adenosyl-L-methionine to catalyze the site-specific 2'-hydroxyl methylation of ribose moieties in pre-ribosomal RNA. Site specificity is provided by a guide RNA that base pairs with the substrate. Methylation occurs at a characteristic distance from the sequence involved in base pairing with the guide RNA. Also acts as a protein methyltransferase by mediating methylation of 'Gln-105' of histone H2A (H2AQ105me), a modification that impairs binding of the FACT complex and is specifically present at 35S ribosomal DNA locus. This chain is rRNA 2'-O-methyltransferase fibrillarin (NOP1), found in Candida glabrata (strain ATCC 2001 / BCRC 20586 / JCM 3761 / NBRC 0622 / NRRL Y-65 / CBS 138) (Yeast).